Here is a 438-residue protein sequence, read N- to C-terminus: Adenylosuccinate synthetase (438 aa).

GTP is bound by residues 13–19 and 41–43; these read GDEGKGK and GHT. Asp-14 acts as the Proton acceptor in catalysis. Asp-14 and Gly-41 together coordinate Mg(2+). IMP is bound by residues 14-17, 39-42, Thr-130, Arg-144, Gln-225, Thr-240, and Arg-310; these read DEGK and NAGH. His-42 (proton donor) is an active-site residue. 306-312 is a substrate binding site; sequence ATTGRLR. GTP is bound by residues Arg-312, 338-340, and 421-423; these read KLD and STG.

Belongs to the adenylosuccinate synthetase family. As to quaternary structure, homodimer. The cofactor is Mg(2+).

It localises to the cytoplasm. It carries out the reaction IMP + L-aspartate + GTP = N(6)-(1,2-dicarboxyethyl)-AMP + GDP + phosphate + 2 H(+). It functions in the pathway purine metabolism; AMP biosynthesis via de novo pathway; AMP from IMP: step 1/2. Plays an important role in the de novo pathway of purine nucleotide biosynthesis. Catalyzes the first committed step in the biosynthesis of AMP from IMP. The sequence is that of Adenylosuccinate synthetase from Aliivibrio fischeri (strain ATCC 700601 / ES114) (Vibrio fischeri).